The following is a 327-amino-acid chain: Serine/threonine-protein phosphatase alpha-1 isoform (327 aa).

Asp62, His64, Asp90, and Asn122 together coordinate Mn(2+). The Proton donor role is filled by His123. Mn(2+) contacts are provided by His171 and His246. Residues Gly308–Lys327 are disordered. Thr315 carries the post-translational modification Phosphothreonine.

It belongs to the PPP phosphatase family. PP-1 subfamily. Interacts with Nop17l. Mn(2+) is required as a cofactor.

The enzyme catalyses O-phospho-L-seryl-[protein] + H2O = L-seryl-[protein] + phosphate. It carries out the reaction O-phospho-L-threonyl-[protein] + H2O = L-threonyl-[protein] + phosphate. The sequence is that of Serine/threonine-protein phosphatase alpha-1 isoform (Pp1alpha-96A) from Drosophila melanogaster (Fruit fly).